The primary structure comprises 92 residues: Large ribosomal subunit protein eL34 (92 aa).

Belongs to the eukaryotic ribosomal protein eL34 family.

This is Large ribosomal subunit protein eL34 from Staphylothermus marinus (strain ATCC 43588 / DSM 3639 / JCM 9404 / F1).